Consider the following 713-residue polypeptide: MCGIFGYVNFLVDKSKGEIIDNLIEGLQRLEYRGYDSAGIAVDGKLTKDPSNGDEEYMDSIIIKTTGKVKVLKQKIIDDQIDRSAIFDNHVGIAHTRWATHGQPKTENCHPHKSDPKGEFIVVHNGIITNYAALRKYLLSKGHVFESETDTECIAKLFKHFYDLNVKAGVFPDLNELTKQVLHELEGSYGLLVKSYHYPGEVCGTRKGSPLLVGVKTDKKLKVDFVDVEFEAQQQHRPQQPQINHNGATSAAELGFIPVAPGEQNLRTSQSRAFLSEDDLPMPVEFFLSSDPASVVQHTKKVLFLEDDDIAHIYDGELRIHRASTKSAGESTVRPIQTLEMELNEIMKGPYKHFMQKEIFEQPDSAFNTMRGRIDFENCVVTLGGLKSWLSTIRRCRRIIMIACGTSYHSCLATRSIFEELTEIPVSVELASDFLDRRSPVFRDDTCVFVSQSGETADSILALQYCLERGALTVGIVNSVGSSMSRQTHCGVHINAGPEIGVASTKAYTSQYIALVMFALSLSNDSISRKGRHEEIIKGLQKIPEQIKQVLKLENKIKDLCNSSLNDQKSLLLLGRGYQFATALEGALKIKEISYMHSEGVLAGELKHGILALVDEDLPIIAFATRDSLFPKVMSAIEQVTARDGRPIVICNEGDAIISNDKVHTTLEVPETVDCLQGLLNVIPLQLISYWLAVNRGIDVDFPRNLAKSVTVE.

C2 (for GATase activity) is an active-site residue. In terms of domain architecture, Glutamine amidotransferase type-2 spans 2–316 (CGIFGYVNFL…DDDIAHIYDG (315 aa)). 2 SIS domains span residues 389–528 (WLST…DSIS) and 561–703 (CNSS…VDFP).

As to quaternary structure, homotetramer.

The catalysed reaction is D-fructose 6-phosphate + L-glutamine = D-glucosamine 6-phosphate + L-glutamate. It participates in nucleotide-sugar biosynthesis; UDP-N-acetyl-alpha-D-glucosamine biosynthesis; alpha-D-glucosamine 6-phosphate from D-fructose 6-phosphate: step 1/1. In terms of biological role, involved in amino sugar synthesis (formation of chitin, supplies the amino sugars of asparagine-linked oligosaccharides of glycoproteins). The chain is Glutamine--fructose-6-phosphate aminotransferase [isomerizing] (GFA1) from Candida albicans (strain SC5314 / ATCC MYA-2876) (Yeast).